Reading from the N-terminus, the 135-residue chain is uncharacterized protein (135 aa).

Residues 35–55 (VVLVLIGATIILVVISVLVVS) form a helical membrane-spanning segment.

The protein localises to the membrane. This is an uncharacterized protein from Saccharomyces cerevisiae (strain ATCC 204508 / S288c) (Baker's yeast).